A 610-amino-acid polypeptide reads, in one-letter code: ABC transporter ATP-binding protein ARB1 (610 aa).

Positions 1-43 are disordered; the sequence is MPPVSASKAKRDAKKAEREAKKAAAGKTIRKLGRKKEAAAEES. Phosphoserine occurs at positions 43 and 65. 2 consecutive ABC transporter domains span residues 82-323 and 393-610; these read IKLS…TNQM and LAFD…NVVL. 114–121 contacts ATP; sequence GENGCGKS. S196 carries the phosphoserine modification. 428 to 435 serves as a coordination point for ATP; it reads GPNGVGKS. Position 446 is a phosphothreonine (T446).

This sequence belongs to the ABC transporter superfamily. ABCF family. EF3 subfamily. Interacts with LSG1.

Its subcellular location is the cytoplasm. It localises to the nucleus. It carries out the reaction ATP + H2O = ADP + phosphate + H(+). Its function is as follows. ATPase that stimulates 40S and 60S ribosome biogenesis. Also involved in ribosome-associated quality control (RQC) pathway, a pathway that mediates ubiquitination and extraction of incompletely synthesized nascent chains for proteasomal degradation: localizes to the ribosomal E-site and stimulates VMS1-dependent tRNA cleavage. The polypeptide is ABC transporter ATP-binding protein ARB1 (ARB1) (Saccharomyces cerevisiae (strain ATCC 204508 / S288c) (Baker's yeast)).